Reading from the N-terminus, the 354-residue chain is Maleylacetate reductase 1 (354 aa).

This sequence belongs to the iron-containing alcohol dehydrogenase family. As to quaternary structure, homodimer.

The catalysed reaction is 3-oxoadipate + NAD(+) = maleylacetate + NADH + H(+). It carries out the reaction 3-oxoadipate + NADP(+) = maleylacetate + NADPH + H(+). Its pathway is aromatic compound metabolism; 3-chlorocatechol degradation. The sequence is that of Maleylacetate reductase 1 (tfdFI) from Cupriavidus pinatubonensis (strain JMP 134 / LMG 1197) (Cupriavidus necator (strain JMP 134)).